A 584-amino-acid polypeptide reads, in one-letter code: 2-succinyl-5-enolpyruvyl-6-hydroxy-3-cyclohexene-1-carboxylate synthase (584 aa).

It belongs to the TPP enzyme family. MenD subfamily. As to quaternary structure, homodimer. Mg(2+) is required as a cofactor. It depends on Mn(2+) as a cofactor. Thiamine diphosphate serves as cofactor.

The enzyme catalyses isochorismate + 2-oxoglutarate + H(+) = 5-enolpyruvoyl-6-hydroxy-2-succinyl-cyclohex-3-ene-1-carboxylate + CO2. It participates in quinol/quinone metabolism; 1,4-dihydroxy-2-naphthoate biosynthesis; 1,4-dihydroxy-2-naphthoate from chorismate: step 2/7. It functions in the pathway quinol/quinone metabolism; menaquinone biosynthesis. Its function is as follows. Catalyzes the thiamine diphosphate-dependent decarboxylation of 2-oxoglutarate and the subsequent addition of the resulting succinic semialdehyde-thiamine pyrophosphate anion to isochorismate to yield 2-succinyl-5-enolpyruvyl-6-hydroxy-3-cyclohexene-1-carboxylate (SEPHCHC). This Bacillus thuringiensis (strain Al Hakam) protein is 2-succinyl-5-enolpyruvyl-6-hydroxy-3-cyclohexene-1-carboxylate synthase.